A 418-amino-acid polypeptide reads, in one-letter code: UDP-N-acetylglucosamine 1-carboxyvinyltransferase (418 aa).

22–23 provides a ligand contact to phosphoenolpyruvate; sequence KN. Arg91 is a UDP-N-acetyl-alpha-D-glucosamine binding site. Cys115 (proton donor) is an active-site residue. Cys115 carries the post-translational modification 2-(S-cysteinyl)pyruvic acid O-phosphothioketal. Residues Asp305 and Ile327 each coordinate UDP-N-acetyl-alpha-D-glucosamine.

It belongs to the EPSP synthase family. MurA subfamily.

It is found in the cytoplasm. It carries out the reaction phosphoenolpyruvate + UDP-N-acetyl-alpha-D-glucosamine = UDP-N-acetyl-3-O-(1-carboxyvinyl)-alpha-D-glucosamine + phosphate. It participates in cell wall biogenesis; peptidoglycan biosynthesis. Its function is as follows. Cell wall formation. Adds enolpyruvyl to UDP-N-acetylglucosamine. The polypeptide is UDP-N-acetylglucosamine 1-carboxyvinyltransferase (Aeromonas hydrophila subsp. hydrophila (strain ATCC 7966 / DSM 30187 / BCRC 13018 / CCUG 14551 / JCM 1027 / KCTC 2358 / NCIMB 9240 / NCTC 8049)).